Consider the following 33-residue polypeptide: Cytochrome b6-f complex subunit 8 (33 aa).

The chain crosses the membrane as a helical span at residues 2-22 (LFTLAWASLAAVFSFSIAMVV).

This sequence belongs to the PetN family. As to quaternary structure, the 4 large subunits of the cytochrome b6-f complex are cytochrome b6, subunit IV (17 kDa polypeptide, PetD), cytochrome f and the Rieske protein, while the 4 small subunits are PetG, PetL, PetM and PetN. The complex functions as a dimer.

The protein resides in the cellular thylakoid membrane. Component of the cytochrome b6-f complex, which mediates electron transfer between photosystem II (PSII) and photosystem I (PSI), cyclic electron flow around PSI, and state transitions. In Prochlorococcus marinus (strain MIT 9303), this protein is Cytochrome b6-f complex subunit 8.